Consider the following 95-residue polypeptide: Small ribosomal subunit protein mS37 (95 aa).

One can recognise a CHCH domain in the interval 27–69 (ANKCLVLMSNLLQCWSSYGHMSPKCAGLVTELKSCTSESALGK). 2 consecutive short sequence motifs (cx9C motif) follow at residues 30–40 (CLVLMSNLLQC) and 51–61 (CAGLVTELKSC). Cystine bridges form between Cys-30–Cys-61 and Cys-40–Cys-51.

It belongs to the mitochondrion-specific ribosomal protein mS37 family. Component of the mitochondrial small ribosomal subunit (mt-SSU). Mature yeast 74S mitochondrial ribosomes consist of a small (37S) and a large (54S) subunit. The 37S small subunit contains a 15S ribosomal RNA (15S mt-rRNA) and 34 different proteins. The 54S large subunit contains a 21S rRNA (21S mt-rRNA) and 46 different proteins.

It is found in the mitochondrion. Its subcellular location is the mitochondrion matrix. Component of the mitochondrial ribosome (mitoribosome), a dedicated translation machinery responsible for the synthesis of mitochondrial genome-encoded proteins, including at least some of the essential transmembrane subunits of the mitochondrial respiratory chain. The mitoribosomes are attached to the mitochondrial inner membrane and translation products are cotranslationally integrated into the membrane. This Saccharomyces cerevisiae (strain ATCC 204508 / S288c) (Baker's yeast) protein is Small ribosomal subunit protein mS37 (MRP10).